We begin with the raw amino-acid sequence, 227 residues long: Cytochrome c oxidase subunit 2 (227 aa).

Residues 1 to 14 lie on the Mitochondrial intermembrane side of the membrane; it reads MAYPMQLGLQDATS. The chain crosses the membrane as a helical span at residues 15–45; sequence PIMEELLHFHDHTLMIVFLISSLVLYIISLM. The Mitochondrial matrix portion of the chain corresponds to 46–59; that stretch reads LTTKLTHTSTMDAQ. The helical transmembrane segment at 60–87 threads the bilayer; the sequence is EVETIWTILPAIILIMIALPSLRILYMM. Over 88–227 the chain is Mitochondrial intermembrane; that stretch reads DEINNPSLTV…HFEKWSASML (140 aa). The Cu cation site is built by His-161, Cys-196, Glu-198, Cys-200, His-204, and Met-207. Residue Glu-198 coordinates Mg(2+).

Belongs to the cytochrome c oxidase subunit 2 family. As to quaternary structure, component of the cytochrome c oxidase (complex IV, CIV), a multisubunit enzyme composed of 14 subunits. The complex is composed of a catalytic core of 3 subunits MT-CO1, MT-CO2 and MT-CO3, encoded in the mitochondrial DNA, and 11 supernumerary subunits COX4I, COX5A, COX5B, COX6A, COX6B, COX6C, COX7A, COX7B, COX7C, COX8 and NDUFA4, which are encoded in the nuclear genome. The complex exists as a monomer or a dimer and forms supercomplexes (SCs) in the inner mitochondrial membrane with NADH-ubiquinone oxidoreductase (complex I, CI) and ubiquinol-cytochrome c oxidoreductase (cytochrome b-c1 complex, complex III, CIII), resulting in different assemblies (supercomplex SCI(1)III(2)IV(1) and megacomplex MCI(2)III(2)IV(2)). Found in a complex with TMEM177, COA6, COX18, COX20, SCO1 and SCO2. Interacts with TMEM177 in a COX20-dependent manner. Interacts with COX20. Interacts with COX16. Cu cation is required as a cofactor.

Its subcellular location is the mitochondrion inner membrane. It catalyses the reaction 4 Fe(II)-[cytochrome c] + O2 + 8 H(+)(in) = 4 Fe(III)-[cytochrome c] + 2 H2O + 4 H(+)(out). Functionally, component of the cytochrome c oxidase, the last enzyme in the mitochondrial electron transport chain which drives oxidative phosphorylation. The respiratory chain contains 3 multisubunit complexes succinate dehydrogenase (complex II, CII), ubiquinol-cytochrome c oxidoreductase (cytochrome b-c1 complex, complex III, CIII) and cytochrome c oxidase (complex IV, CIV), that cooperate to transfer electrons derived from NADH and succinate to molecular oxygen, creating an electrochemical gradient over the inner membrane that drives transmembrane transport and the ATP synthase. Cytochrome c oxidase is the component of the respiratory chain that catalyzes the reduction of oxygen to water. Electrons originating from reduced cytochrome c in the intermembrane space (IMS) are transferred via the dinuclear copper A center (CU(A)) of subunit 2 and heme A of subunit 1 to the active site in subunit 1, a binuclear center (BNC) formed by heme A3 and copper B (CU(B)). The BNC reduces molecular oxygen to 2 water molecules using 4 electrons from cytochrome c in the IMS and 4 protons from the mitochondrial matrix. The protein is Cytochrome c oxidase subunit 2 (MT-CO2) of Damaliscus pygargus phillipsi (Blesbok).